Consider the following 204-residue polypeptide: Probable dTDP-4-oxo-2,6-dideoxy-D-glucose 3,5-epimerase (204 aa).

Residues Arg21, Glu26, 45-47 (QAN), Lys70, and His117 each bind substrate. Tyr130 acts as the Proton donor in catalysis. A substrate-binding site is contributed by Glu141. The tract at residues 164–204 (VGEGTPTHRPWRRPRRPGILPDYEGVPGALHRGGGRRGTGP) is disordered.

Belongs to the dTDP-4-dehydrorhamnose 3,5-epimerase family.

Its pathway is antibiotic biosynthesis. Involved in the biosynthesis of one of the two 2,6-deoxysugars, dTDP-L-oleandrose, attached to the macrolactone ring oleandolide to produce the aglycone antibiotic oleandomycin. Probably catalyzes the conversion of dTDP-4-keto-2,6-dideoxy-alpha-D-glucose to dTDP-4-keto-2,6-dideoxy-beta-L-galactose. The polypeptide is Probable dTDP-4-oxo-2,6-dideoxy-D-glucose 3,5-epimerase (Streptomyces antibioticus).